An 85-amino-acid chain; its full sequence is Arminin 524 (85 aa).

The N-terminal stretch at 1–18 is a signal peptide; it reads MKAVFAILFLAFIALTYA. Residues 19-57 constitute a propeptide that is removed on maturation; the sequence is KSYDEVKEEIKNEVEREIFEDLEEESDELDNDVEEFNDA. Alanine 82 is subject to Alanine amide.

Belongs to the arminin family. Expressed in entodermal epithelium along the body column.

It localises to the secreted. Its subcellular location is the target cell membrane. In terms of biological role, antimicrobial peptide with a broad-spectrum antimicrobial activity. Keeps its antibacterial activity under a wide range of salt concentrations that mimic physiological conditions of human blood, which is surprising, since Hydra is an obligate freshwater animal with nearly no salt tolerance. Does not affect red blood cells. This chain is Arminin 524, found in Hydra oligactis (Brown hydra).